Here is a 481-residue protein sequence, read N- to C-terminus: Betaine aldehyde dehydrogenase 2 (481 aa).

Positions 29 and 96 each coordinate K(+). Residue 152–154 coordinates NAD(+); sequence GAW. The active-site Charge relay system is the K164. An NAD(+)-binding site is contributed by 178-181; that stretch reads KPSE. V182 contributes to the K(+) binding site. NAD(+) is bound at residue 231–234; the sequence is SVKT. Position 246 (I246) interacts with K(+). E252 functions as the Proton acceptor in the catalytic mechanism. 3 residues coordinate NAD(+): G254, C286, and E383. The active-site Nucleophile is the C286. At C286 the chain carries Cysteine sulfenic acid (-SOH). 2 residues coordinate K(+): K453 and G456. E460 functions as the Charge relay system in the catalytic mechanism.

The protein belongs to the aldehyde dehydrogenase family. In terms of assembly, dimer of dimers. K(+) serves as cofactor.

The catalysed reaction is betaine aldehyde + NAD(+) + H2O = glycine betaine + NADH + 2 H(+). The protein operates within amine and polyamine biosynthesis; betaine biosynthesis via choline pathway; betaine from betaine aldehyde: step 1/1. In terms of biological role, involved in the biosynthesis of the osmoprotectant glycine betaine. Catalyzes the irreversible oxidation of betaine aldehyde to the corresponding acid. The polypeptide is Betaine aldehyde dehydrogenase 2 (Rhizobium meliloti (strain 1021) (Ensifer meliloti)).